The sequence spans 276 residues: Omega-amidase NIT2-B (276 aa).

The CN hydrolase domain occupies 4–248; sequence FRLSLVQFLV…ETVISADIDL (245 aa). The Proton acceptor role is filled by Glu43. Residue Lys112 is the Proton donor of the active site. Catalysis depends on Cys153, which acts as the Nucleophile.

The protein belongs to the carbon-nitrogen hydrolase superfamily. NIT1/NIT2 family. Homodimer.

It is found in the cytoplasm. It catalyses the reaction 2-oxoglutaramate + H2O = 2-oxoglutarate + NH4(+). The catalysed reaction is 2-oxosuccinamate + H2O = oxaloacetate + NH4(+). Its function is as follows. Has omega-amidase activity. The role of omega-amidase is to remove potentially toxic intermediates by converting 2-oxoglutaramate and 2-oxosuccinamate to biologically useful 2-oxoglutarate and oxaloacetate, respectively. The polypeptide is Omega-amidase NIT2-B (nit2b) (Xenopus laevis (African clawed frog)).